Consider the following 218-residue polypeptide: Histone chaperone ASF1B (218 aa).

This sequence belongs to the ASF1 family. As to quaternary structure, interacts with histone H3 and histone H4. Interacts strongly with the N-terminus of TOUSLED. In terms of processing, phosphorylated in vitro by TOUSLED.

The protein localises to the nucleus. Functionally, histone chaperone that facilitates histone deposition and histone exchange and removal during nucleosome assembly and disassembly. This is Histone chaperone ASF1B (ASF1B) from Arabidopsis thaliana (Mouse-ear cress).